The chain runs to 1312 residues: AT-rich interactive domain-containing protein 4B (1312 aa).

Disordered stretches follow at residues 124–166 and 266–306; these read PLTN…EDDR and KTEL…EPFP. 3 positions are modified to phosphoserine: Ser276, Ser295, and Ser296. A compositionally biased stretch (acidic residues) spans 277 to 305; sequence EAEEEEEEEDDEKEKEDNSSEEEEEIEPF. In terms of domain architecture, ARID spans 306–398; the sequence is PEERENFLQQ…YLYGFEEYCR (93 aa). Glycyl lysine isopeptide (Lys-Gly) (interchain with G-Cter in SUMO2) cross-links involve residues Lys429, Lys440, and Lys462. Disordered stretches follow at residues 458-577, 635-680, 708-894, 909-1212, and 1252-1288; these read EIER…KVQV, IKHR…EMVS, QASE…TTGF, LNNS…NRLP, and SEVA…SITA. The tract at residues 465–473 is antigenic epitope; sequence IKPSLGSKK. Ser483 is modified (phosphoserine). Residues 483–496 are compositionally biased toward basic and acidic residues; sequence SDQEKEVNIKKPED. Residue Lys517 forms a Glycyl lysine isopeptide (Lys-Gly) (interchain with G-Cter in SUMO2) linkage. Acidic residues predominate over residues 532-567; that stretch reads NKEEDEDDEEAEEEEEEEEEEEDEDDDDNNEEEEFE. The Tudor-knot domain occupies 572-624; sequence GMKVQVRYGRGKNQKMYEASIKDSDVEGGEVLYLVHYCGWNVRYDEWIKADKI. Positions 643–656 are enriched in basic and acidic residues; it reads NKLDKEKDKDEKYS. A phosphoserine mark is found at Ser666, Ser675, and Ser717. Composition is skewed to basic and acidic residues over residues 722–754 and 778–787; these read ERGA…KEEQ and SPERLRKDIE. A coiled-coil region spans residues 728–754; the sequence is MDNNGKEESKIDHLTNNRNDLISKEEQ. Lys751 participates in a covalent cross-link: Glycyl lysine isopeptide (Lys-Gly) (interchain with G-Cter in SUMO2). Phosphoserine is present on residues Ser778 and Ser790. Residues 788–799 show a composition bias toward acidic residues; that stretch reads VLSEDTDYEEDE. Thr793 is modified (phosphothreonine). Basic and acidic residues-rich tracts occupy residues 807-816, 828-852, 909-927, and 995-1010; these read VKKDTTDKSS, CNTE…KESL, LNNS…RKDV, and KPIE…RKAE. Ser1014 is subject to Phosphoserine. Thr1026 carries the phosphothreonine modification. A compositionally biased stretch (low complexity) spans 1028-1037; it reads ESPSSVTVTE. Ser1029 carries the post-translational modification Phosphoserine. A compositionally biased stretch (polar residues) spans 1038-1047; sequence GSRQQSSVTV. The segment covering 1056–1065 has biased composition (basic and acidic residues); the sequence is EEVRSIKSET. Residues 1087 to 1101 are compositionally biased toward low complexity; sequence SSPAGFDASVSSSSS. The segment at 1130-1137 is antigenic epitope; it reads KKQKRSHK. A compositionally biased stretch (basic residues) spans 1130-1148; sequence KKQKRSHKATVVNNKKKGK. Thr1150 carries the phosphothreonine modification. A phosphoserine mark is found at Ser1152, Ser1153, Ser1155, and Ser1159. The segment covering 1162–1191 has biased composition (polar residues); it reads ESITKSQPVKSVSTGMKSHSTKSPARTQSP. The segment covering 1196–1208 has biased composition (basic and acidic residues); the sequence is KNGDKDPDLKEPS. Residues 1231–1270 are a coiled coil; it reads ERITILQEKLQEIRKHYLSLKSEVASIDRRRKRLKKKERE. The span at 1272–1288 shows a compositional bias: low complexity; it reads AATSSSSSSPSSSSITA.

Component of a Sin3A corepressor complex consisting of SIN3A, SAP130, SUDS3/SAP45, SAP180, HDAC1 and HDAC2. Interacts with ARID4A. Interacts with AR. In terms of tissue distribution, highly expressed in the testis and in breast, lung, colon, pancreatic and ovarian cancers. Expressed at low levels in the thymus, prostate and ovary.

It localises to the nucleus. Its subcellular location is the cytoplasm. Its function is as follows. Acts as a transcriptional repressor. May function in the assembly and/or enzymatic activity of the Sin3A corepressor complex or in mediating interactions between the complex and other regulatory complexes. Plays a role in the regulation of epigenetic modifications at the PWS/AS imprinting center near the SNRPN promoter, where it might function as part of a complex with RB1 and ARID4A. Involved in spermatogenesis, together with ARID4A, where it functions as a transcriptional coactivator for AR (androgen receptor) and enhances expression of genes required for sperm maturation. Regulates expression of the tight junction protein CLDN3 in the testis, which is important for integrity of the blood-testis barrier. Plays a role in myeloid homeostasis where it regulates the histone methylation state of bone marrow cells and expression of various genes involved in hematopoiesis. May function as a leukemia suppressor. The protein is AT-rich interactive domain-containing protein 4B (ARID4B) of Homo sapiens (Human).